A 314-amino-acid polypeptide reads, in one-letter code: MKIILANPRGFCAGVDRAISIVELALEIHGAPIYVRHEVVHNRFVVNGLRDRGAIFVEELSEVPDGAIVIFSAHGVSQAVRQEAKDRNLKVFDATCPLVTKVHMQVARASRKGTKAILIGHKGHPEVEGTMGQYSNEDGGIFLIEKVEDIARLPMQDNDDLTFMTQTTLSLDDTAETIAALKEKYPAIQGPHKNDICYATTNRQEAVRELAKLSDLVLVVGSKNSSNSNRLAELASRMGIKSQLLDDPSDIQDDWFNDVKTIGITAGASAPEELVQSIISRLKEFGANTIEELQGLEENMFFEVPKELRIKEVN.

C12 is a binding site for [4Fe-4S] cluster. (2E)-4-hydroxy-3-methylbut-2-enyl diphosphate contacts are provided by H41 and H74. 2 residues coordinate dimethylallyl diphosphate: H41 and H74. Isopentenyl diphosphate-binding residues include H41 and H74. C96 serves as a coordination point for [4Fe-4S] cluster. H124 contacts (2E)-4-hydroxy-3-methylbut-2-enyl diphosphate. H124 serves as a coordination point for dimethylallyl diphosphate. An isopentenyl diphosphate-binding site is contributed by H124. E126 serves as the catalytic Proton donor. Residue T167 coordinates (2E)-4-hydroxy-3-methylbut-2-enyl diphosphate. C197 contributes to the [4Fe-4S] cluster binding site. Residues S225, S226, N227, and S269 each coordinate (2E)-4-hydroxy-3-methylbut-2-enyl diphosphate. S225, S226, N227, and S269 together coordinate dimethylallyl diphosphate. Isopentenyl diphosphate is bound by residues S225, S226, N227, and S269.

It belongs to the IspH family. Requires [4Fe-4S] cluster as cofactor.

The enzyme catalyses isopentenyl diphosphate + 2 oxidized [2Fe-2S]-[ferredoxin] + H2O = (2E)-4-hydroxy-3-methylbut-2-enyl diphosphate + 2 reduced [2Fe-2S]-[ferredoxin] + 2 H(+). The catalysed reaction is dimethylallyl diphosphate + 2 oxidized [2Fe-2S]-[ferredoxin] + H2O = (2E)-4-hydroxy-3-methylbut-2-enyl diphosphate + 2 reduced [2Fe-2S]-[ferredoxin] + 2 H(+). It functions in the pathway isoprenoid biosynthesis; dimethylallyl diphosphate biosynthesis; dimethylallyl diphosphate from (2E)-4-hydroxy-3-methylbutenyl diphosphate: step 1/1. It participates in isoprenoid biosynthesis; isopentenyl diphosphate biosynthesis via DXP pathway; isopentenyl diphosphate from 1-deoxy-D-xylulose 5-phosphate: step 6/6. Functionally, catalyzes the conversion of 1-hydroxy-2-methyl-2-(E)-butenyl 4-diphosphate (HMBPP) into a mixture of isopentenyl diphosphate (IPP) and dimethylallyl diphosphate (DMAPP). Acts in the terminal step of the DOXP/MEP pathway for isoprenoid precursor biosynthesis. The chain is 4-hydroxy-3-methylbut-2-enyl diphosphate reductase from Haemophilus influenzae (strain PittGG).